The following is a 224-amino-acid chain: MMHALGDLFKPEEKEIKMDRDKCSGACVAIWTWKTIVRLICLIAGGVQVFMGGYIFYSISFTKDHSVQNYLSLSVVGFYACLTGLLILFAETRTRWTRRAVKVFVFLCNGLSRGIIYILIGAIDQSPIPFKFLNIITSMHIGLVCIAGGVVSIIEFLITYRRNRARLNQAIANHQQQAKGTELYDLFEREDFNNPEDAAAYDLEKGKDPNYIHQDLEMQPVQEA.

4 helical membrane passes run 39 to 59, 70 to 90, 103 to 123, and 139 to 159; these read LICL…FYSI, YLSL…ILFA, VFVF…IGAI, and MHIG…FLIT.

The protein resides in the membrane. This is an uncharacterized protein from Dictyostelium discoideum (Social amoeba).